The sequence spans 416 residues: N-acetylmuramoyl-L-alanine amidase AmiC (416 aa).

An N-terminal signal peptide occupies residues 1–26 (MIKLTRRQIIRRTAGTLFALSPIASA). Positions 166-191 (RGSPEADLAQNTTPQPGRGRNGRRPV) are disordered. A MurNAc-LAA domain is found at 192-405 (IMLDPGHGGE…CAQSIASGVQ (214 aa)).

Belongs to the N-acetylmuramoyl-L-alanine amidase 3 family.

The protein resides in the periplasm. The catalysed reaction is Hydrolyzes the link between N-acetylmuramoyl residues and L-amino acid residues in certain cell-wall glycopeptides.. Functionally, cell-wall hydrolase involved in septum cleavage during cell division. This Neisseria meningitidis serogroup B (strain ATCC BAA-335 / MC58) protein is N-acetylmuramoyl-L-alanine amidase AmiC (amiC).